Reading from the N-terminus, the 66-residue chain is Protein translocase subunit SecE (66 aa).

A helical membrane pass occupies residues 29–49; it reads LVASTLVVVVAVFIFSLTCLV.

This sequence belongs to the SecE/SEC61-gamma family. As to quaternary structure, component of the Sec protein translocase complex. Heterotrimer consisting of SecY, SecE and SecG subunits. The heterotrimers can form oligomers, although 1 heterotrimer is thought to be able to translocate proteins. Interacts with the ribosome. Interacts with SecDF, and other proteins may be involved. Interacts with SecA.

The protein resides in the cell inner membrane. Functionally, essential subunit of the Sec protein translocation channel SecYEG. Clamps together the 2 halves of SecY. May contact the channel plug during translocation. This chain is Protein translocase subunit SecE, found in Rickettsia rickettsii.